Consider the following 298-residue polypeptide: Probable phosphoserine phosphatase (298 aa).

Aspartate 82 acts as the Nucleophile in catalysis. Residues aspartate 82 and aspartate 84 each contribute to the Mg(2+) site. The Proton donor role is filled by aspartate 84. Residues glutamate 91, arginine 127, serine 170–glycine 171, and lysine 217 contribute to the substrate site. Residue aspartate 240 participates in Mg(2+) binding. Asparagine 243 provides a ligand contact to substrate.

The protein belongs to the HAD-like hydrolase superfamily. SerB family. The cofactor is Mg(2+).

It catalyses the reaction O-phospho-L-serine + H2O = L-serine + phosphate. It carries out the reaction O-phospho-D-serine + H2O = D-serine + phosphate. It participates in amino-acid biosynthesis; L-serine biosynthesis; L-serine from 3-phospho-D-glycerate: step 3/3. The chain is Probable phosphoserine phosphatase from Schizosaccharomyces pombe (strain 972 / ATCC 24843) (Fission yeast).